The chain runs to 291 residues: 4-hydroxy-tetrahydrodipicolinate synthase (291 aa).

Threonine 45 contributes to the pyruvate binding site. Tyrosine 131 acts as the Proton donor/acceptor in catalysis. Residue lysine 159 is the Schiff-base intermediate with substrate of the active site. Position 202 (isoleucine 202) interacts with pyruvate.

It belongs to the DapA family. In terms of assembly, homotetramer; dimer of dimers.

The protein resides in the cytoplasm. It carries out the reaction L-aspartate 4-semialdehyde + pyruvate = (2S,4S)-4-hydroxy-2,3,4,5-tetrahydrodipicolinate + H2O + H(+). It functions in the pathway amino-acid biosynthesis; L-lysine biosynthesis via DAP pathway; (S)-tetrahydrodipicolinate from L-aspartate: step 3/4. Functionally, catalyzes the condensation of (S)-aspartate-beta-semialdehyde [(S)-ASA] and pyruvate to 4-hydroxy-tetrahydrodipicolinate (HTPA). In Methanosarcina acetivorans (strain ATCC 35395 / DSM 2834 / JCM 12185 / C2A), this protein is 4-hydroxy-tetrahydrodipicolinate synthase.